A 497-amino-acid polypeptide reads, in one-letter code: E3 ubiquitin-protein ligase CBL-C (497 aa).

The segment at P7–C145 is 4H. The Cbl-PTB domain occupies P7–E321. An EF-hand-like region spans residues G146 to F218. Ca(2+) is bound by residues D199, T201, and E210. The tract at residues Q219–E321 is SH2-like. R264 lines the 4-O-phospho-L-tyrosine pocket. A linker region spans residues L322–L350. Position 341 is a phosphotyrosine; by SRC (Y341). The RING-type zinc-finger motif lies at C351 to R390. Residues C351–S497 are interaction with RET.

Interacts with Ubiquitin-conjugating enzyme E2 UBE2D2 and UBE2D3. Interacts with EGFR (tyrosine phosphorylated). Interacts with the SH3 domain proteins LYN and CRK. Interacts (via RING-type zinc finger) with TGFB1I1 (via LIM zinc-binding domain 2); the interaction is direct and enhances the E3 activity. Interacts directly with RET (inactive) and CD2AP; dissociates from RET upon RET activation by GDNF which also increases the interaction with CD2AP suggesting dissociation as CBLC:CD2AP complex. Interacts with SRC; the interaction is enhanced when SRC is phosphorylated at 'Tyr-419'. Post-translationally, phosphorylated on multiple tyrosine residues by SRC. In terms of processing, autoubiquitinated, when phosphorylated at Tyr-341.

The catalysed reaction is S-ubiquitinyl-[E2 ubiquitin-conjugating enzyme]-L-cysteine + [acceptor protein]-L-lysine = [E2 ubiquitin-conjugating enzyme]-L-cysteine + N(6)-ubiquitinyl-[acceptor protein]-L-lysine.. Its activity is regulated as follows. Phosphorylation at Tyr-341 is necessary and sufficient for the activation of E3 activity. Acts as an E3 ubiquitin-protein ligase, which accepts ubiquitin from specific E2 ubiquitin-conjugating enzymes, and then transfers it to substrates promoting their degradation by the proteasome. Functionally coupled with the E2 ubiquitin-protein ligases UB2D1, UB2D2 and UB2D3. Regulator of EGFR mediated signal transduction; upon EGF activation, ubiquitinates EGFR. Inhibits EGF stimulated MAPK1 activation. Promotes ubiquitination of SRC phosphorylated at 'Tyr-419', has the highest ubiquitin ligase activity among CBL family proteins. In collaboration with CD2AP may act as regulatory checkpoint for Ret signaling by modulating the rate of RET degradation after ligand activation; CD2AP converts it from an inhibitor to a promoter of RET degradation; the function limits the potency of GDNF on neuronal survival. This Rattus norvegicus (Rat) protein is E3 ubiquitin-protein ligase CBL-C (Cblc).